We begin with the raw amino-acid sequence, 128 residues long: NHP2-like protein 1 (128 aa).

The segment at 36-48 (RKGANEATKTLNR) is interaction with U4 snRNA and U4atac snRNA. An important for U4 snRNA-binding region spans residues 96–128 (SRPVIACAVTIKEGSQLKPQIQSLQQSIERLLV).

It belongs to the eukaryotic ribosomal protein eL8 family. As to quaternary structure, identified in the spliceosome B complex. Component of the U4/U6-U5 tri-snRNP complex. Part of the small subunit (SSU) processome, composed of more than 70 proteins and the RNA chaperone small nucleolar RNA (snoRNA) U3.

The protein localises to the nucleus. It is found in the nucleolus. In terms of biological role, part of the small subunit (SSU) processome, first precursor of the small eukaryotic ribosomal subunit. During the assembly of the SSU processome in the nucleolus, many ribosome biogenesis factors, an RNA chaperone and ribosomal proteins associate with the nascent pre-rRNA and work in concert to generate RNA folding, modifications, rearrangements and cleavage as well as targeted degradation of pre-ribosomal RNA by the RNA exosome. Involved in pre-mRNA splicing as component of the spliceosome. Binds to the 5'-stem-loop of U4 snRNA and thereby contributes to spliceosome assembly. The protein undergoes a conformational change upon RNA-binding. Core component of box C/D small nucleolar ribonucleoprotein (snoRNP) complexes that function in methylation of multiple sites on ribosomal RNAs (rRNAs) and messenger RNAs (mRNAs). In Xenopus tropicalis (Western clawed frog), this protein is NHP2-like protein 1.